Here is a 1403-residue protein sequence, read N- to C-terminus: DNA-directed RNA polymerase subunit beta' (1403 aa).

Zn(2+) is bound by residues C71, C73, C86, and C89. 3 residues coordinate Mg(2+): D462, D464, and D466. Zn(2+) contacts are provided by C811, C885, C892, and C895.

The protein belongs to the RNA polymerase beta' chain family. The RNAP catalytic core consists of 2 alpha, 1 beta, 1 beta' and 1 omega subunit. When a sigma factor is associated with the core the holoenzyme is formed, which can initiate transcription. The cofactor is Mg(2+). Requires Zn(2+) as cofactor.

It catalyses the reaction RNA(n) + a ribonucleoside 5'-triphosphate = RNA(n+1) + diphosphate. DNA-dependent RNA polymerase catalyzes the transcription of DNA into RNA using the four ribonucleoside triphosphates as substrates. The protein is DNA-directed RNA polymerase subunit beta' of Bartonella bacilliformis (strain ATCC 35685 / KC583 / Herrer 020/F12,63).